Consider the following 161-residue polypeptide: Troponin C, slow skeletal and cardiac muscles (161 aa).

Met1 carries the N-acetylmethionine modification. EF-hand domains are found at residues 16–51, 52–87, 92–127, and 128–161; these read QKNEFKAAFDIFVLGAEDGCISTKELGKVMRMLGQN, PTPEELQEMIDEVDEDGSGTVDFDEFLVMMVRCMKD, KSEEELSDLFRMFDKNADGYIDLEELKIMLQATGET, and ITEDDIEELMKDGDKNNDGRIDYDEFLEFMKGVE. Residues Asp65, Asp67, Ser69, Thr71, and Glu76 each coordinate Ca(2+). At Ser98 the chain carries Phosphoserine. Positions 105, 107, 109, 111, 116, 141, 143, 145, 147, and 152 each coordinate Ca(2+).

Belongs to the troponin C family.

Troponin is the central regulatory protein of striated muscle contraction. Tn consists of three components: Tn-I which is the inhibitor of actomyosin ATPase, Tn-T which contains the binding site for tropomyosin and Tn-C. The binding of calcium to Tn-C abolishes the inhibitory action of Tn on actin filaments. This Bos taurus (Bovine) protein is Troponin C, slow skeletal and cardiac muscles (TNNC1).